We begin with the raw amino-acid sequence, 157 residues long: Acetyltransferase PseH (157 aa).

Positions 5-152 (KNFTELNSQE…YHICLKQSDC (148 aa)) constitute an N-acetyltransferase domain.

In terms of biological role, catalyzes the third step in the biosynthesis of pseudaminic acid, a sialic-acid-like sugar that is used to modify flagellin. Mediates N-4 acetylation of UDP-4-amino-4,6-dideoxy-beta-L-AltNAc to form UDP-2,4-diacetamido-2,4,6-trideoxy-beta-L-altropyranose. The sequence is that of Acetyltransferase PseH (pseH) from Campylobacter jejuni subsp. jejuni serotype O:23/36 (strain 81-176).